A 436-amino-acid polypeptide reads, in one-letter code: Trigger factor (436 aa).

Residues 163-248 (TDRVIIDFAG…VKNVAEAILP (86 aa)) enclose the PPIase FKBP-type domain.

The protein belongs to the FKBP-type PPIase family. Tig subfamily.

The protein resides in the cytoplasm. It carries out the reaction [protein]-peptidylproline (omega=180) = [protein]-peptidylproline (omega=0). Its function is as follows. Involved in protein export. Acts as a chaperone by maintaining the newly synthesized protein in an open conformation. Functions as a peptidyl-prolyl cis-trans isomerase. In Laribacter hongkongensis (strain HLHK9), this protein is Trigger factor.